A 403-amino-acid polypeptide reads, in one-letter code: Aminomethyltransferase, mitochondrial (403 aa).

The N-terminal 28 residues, 1-28 (MHRIVSVVAPLGFRLQAQPLVQSRPLSS), are a transit peptide targeting the mitochondrion. Substrate is bound by residues Glu232 and Arg261. An N6-succinyllysine modification is found at Lys368. Tyr399 is a binding site for substrate.

The protein belongs to the GcvT family. The glycine cleavage system is composed of four proteins: P, T, L and H.

Its subcellular location is the mitochondrion. It catalyses the reaction N(6)-[(R)-S(8)-aminomethyldihydrolipoyl]-L-lysyl-[protein] + (6S)-5,6,7,8-tetrahydrofolate = N(6)-[(R)-dihydrolipoyl]-L-lysyl-[protein] + (6R)-5,10-methylene-5,6,7,8-tetrahydrofolate + NH4(+). Its function is as follows. The glycine cleavage system catalyzes the degradation of glycine. The protein is Aminomethyltransferase, mitochondrial of Mus musculus (Mouse).